A 197-amino-acid polypeptide reads, in one-letter code: Negative modulator of initiation of replication (197 aa).

This sequence belongs to the SeqA family. As to quaternary structure, homodimer. Polymerizes to form helical filaments.

The protein localises to the cytoplasm. Its function is as follows. Negative regulator of replication initiation, which contributes to regulation of DNA replication and ensures that replication initiation occurs exactly once per chromosome per cell cycle. Binds to pairs of hemimethylated GATC sequences in the oriC region, thus preventing assembly of replication proteins and re-initiation at newly replicated origins. Repression is relieved when the region becomes fully methylated. The chain is Negative modulator of initiation of replication from Pseudoalteromonas translucida (strain TAC 125).